Reading from the N-terminus, the 640-residue chain is Probable potassium transport system protein Kup 3 (640 aa).

Residues 1–15 (MTVDAAATPAEAPAT) show a composition bias toward low complexity. The interval 1–20 (MTVDAAATPAEAPATNGHGD) is disordered. A run of 12 helical transmembrane segments spans residues 30–50 (LTLG…LYAL), 71–91 (VISL…VVIL), 117–137 (ASII…DAVI), 155–175 (AAFD…LFAV), 183–203 (VAAF…IAAF), 224–244 (FMLH…LAVT), 265–285 (WLFV…ALII), 294–314 (PFFL…ATVA), 363–383 (LLLA…ALAS), 385–405 (YGIS…VVIW), 410–430 (WSPL…LTFL), and 437–457 (VLEG…LMYT).

The protein belongs to the HAK/KUP transporter (TC 2.A.72) family.

Its subcellular location is the cell inner membrane. The enzyme catalyses K(+)(in) + H(+)(in) = K(+)(out) + H(+)(out). Functionally, transport of potassium into the cell. Likely operates as a K(+):H(+) symporter. In Bradyrhizobium sp. (strain BTAi1 / ATCC BAA-1182), this protein is Probable potassium transport system protein Kup 3.